Reading from the N-terminus, the 475-residue chain is ATP synthase subunit beta (475 aa).

An ATP-binding site is contributed by 152–159; that stretch reads GGAGVGKT.

This sequence belongs to the ATPase alpha/beta chains family. As to quaternary structure, F-type ATPases have 2 components, CF(1) - the catalytic core - and CF(0) - the membrane proton channel. CF(1) has five subunits: alpha(3), beta(3), gamma(1), delta(1), epsilon(1). CF(0) has three main subunits: a(1), b(2) and c(9-12). The alpha and beta chains form an alternating ring which encloses part of the gamma chain. CF(1) is attached to CF(0) by a central stalk formed by the gamma and epsilon chains, while a peripheral stalk is formed by the delta and b chains.

It localises to the cell membrane. The catalysed reaction is ATP + H2O + 4 H(+)(in) = ADP + phosphate + 5 H(+)(out). Produces ATP from ADP in the presence of a proton gradient across the membrane. The catalytic sites are hosted primarily by the beta subunits. This is ATP synthase subunit beta from Wolbachia pipientis wMel.